A 227-amino-acid polypeptide reads, in one-letter code: Cytochrome c oxidase subunit 2 (227 aa).

The Mitochondrial intermembrane portion of the chain corresponds to 1–14 (MAYPFQLGLQDATS). A helical transmembrane segment spans residues 15–45 (PIMEELLHFHDHTLMIVFLISSLVLYIISLM). Topologically, residues 46 to 59 (LTTKLTHTSTMDAQ) are mitochondrial matrix. A helical transmembrane segment spans residues 60–87 (EVETVWTILPAIILVLIALPSLRILYMM). Residues 88–227 (DEINNPSLTV…YFETWSALMV (140 aa)) are Mitochondrial intermembrane-facing. Residues H161, C196, E198, C200, H204, and M207 each coordinate Cu cation. Residue E198 participates in Mg(2+) binding. Y218 is subject to Phosphotyrosine.

It belongs to the cytochrome c oxidase subunit 2 family. Component of the cytochrome c oxidase (complex IV, CIV), a multisubunit enzyme composed of 14 subunits. The complex is composed of a catalytic core of 3 subunits MT-CO1, MT-CO2 and MT-CO3, encoded in the mitochondrial DNA, and 11 supernumerary subunits COX4I, COX5A, COX5B, COX6A, COX6B, COX6C, COX7A, COX7B, COX7C, COX8 and NDUFA4, which are encoded in the nuclear genome. The complex exists as a monomer or a dimer and forms supercomplexes (SCs) in the inner mitochondrial membrane with NADH-ubiquinone oxidoreductase (complex I, CI) and ubiquinol-cytochrome c oxidoreductase (cytochrome b-c1 complex, complex III, CIII), resulting in different assemblies (supercomplex SCI(1)III(2)IV(1) and megacomplex MCI(2)III(2)IV(2)). Found in a complex with TMEM177, COA6, COX18, COX20, SCO1 and SCO2. Interacts with TMEM177 in a COX20-dependent manner. Interacts with COX20. Interacts with COX16. The cofactor is Cu cation.

It localises to the mitochondrion inner membrane. The catalysed reaction is 4 Fe(II)-[cytochrome c] + O2 + 8 H(+)(in) = 4 Fe(III)-[cytochrome c] + 2 H2O + 4 H(+)(out). Its function is as follows. Component of the cytochrome c oxidase, the last enzyme in the mitochondrial electron transport chain which drives oxidative phosphorylation. The respiratory chain contains 3 multisubunit complexes succinate dehydrogenase (complex II, CII), ubiquinol-cytochrome c oxidoreductase (cytochrome b-c1 complex, complex III, CIII) and cytochrome c oxidase (complex IV, CIV), that cooperate to transfer electrons derived from NADH and succinate to molecular oxygen, creating an electrochemical gradient over the inner membrane that drives transmembrane transport and the ATP synthase. Cytochrome c oxidase is the component of the respiratory chain that catalyzes the reduction of oxygen to water. Electrons originating from reduced cytochrome c in the intermembrane space (IMS) are transferred via the dinuclear copper A center (CU(A)) of subunit 2 and heme A of subunit 1 to the active site in subunit 1, a binuclear center (BNC) formed by heme A3 and copper B (CU(B)). The BNC reduces molecular oxygen to 2 water molecules using 4 electrons from cytochrome c in the IMS and 4 protons from the mitochondrial matrix. The polypeptide is Cytochrome c oxidase subunit 2 (MT-CO2) (Cerdocyon thous (Crab-eating fox)).